A 350-amino-acid polypeptide reads, in one-letter code: FAD:protein FMN transferase (350 aa).

Residues 1-19 (MDMTFFRAALLGACVLLSG) form the signal peptide. Cys-20 carries the N-palmitoyl cysteine lipid modification. A lipid anchor (S-diacylglycerol cysteine) is attached at Cys-20. FAD is bound by residues Met-41, Trp-78, 119–121 (AMD), and Asp-181. Thr-184 contributes to the Mg(2+) binding site. FAD is bound by residues Glu-187 and Ile-272. Residues Asp-298, Asp-301, and Thr-302 each coordinate Mg(2+).

Belongs to the ApbE family. Mg(2+) is required as a cofactor.

Its subcellular location is the cell inner membrane. The enzyme catalyses L-threonyl-[protein] + FAD = FMN-L-threonyl-[protein] + AMP + H(+). Functionally, flavin transferase that catalyzes the transfer of the FMN moiety of FAD and its covalent binding to the hydroxyl group of a threonine residue in a target flavoprotein such as NqrB and NqrC, two subunits of the NQR complex. The chain is FAD:protein FMN transferase from Klebsiella pneumoniae (strain 342).